The primary structure comprises 119 residues: Host cell factor C1 regulator 1 (119 aa).

The segment at 1 to 34 (MILQQPLERGPQGRAQRDPRAASGASGGLDAREP) is disordered. An interaction with HCFC1 region spans residues 57 to 60 (DHPY). The Nuclear export signal signature appears at 91–100 (IPEALRLLRL).

Interacts with HCFC1.

It is found in the cytoplasm. It localises to the nucleus. In terms of biological role, regulates HCFC1 activity by modulating its subcellular localization. Overexpression of HCFC1R1 leads to accumulation of HCFC1 in the cytoplasm. HCFC1R1-mediated export may provide the pool of cytoplasmic HCFC1 required for import of virion-derived VP16 into the nucleus. This chain is Host cell factor C1 regulator 1 (HCFC1R1), found in Bos taurus (Bovine).